Reading from the N-terminus, the 83-residue chain is Small ribosomal subunit protein bS16 (83 aa).

It belongs to the bacterial ribosomal protein bS16 family.

This chain is Small ribosomal subunit protein bS16, found in Ectopseudomonas mendocina (strain ymp) (Pseudomonas mendocina).